The chain runs to 502 residues: UPF0371 protein CLD_0424 (502 aa).

This sequence belongs to the UPF0371 family.

The polypeptide is UPF0371 protein CLD_0424 (Clostridium botulinum (strain Okra / Type B1)).